Here is a 219-residue protein sequence, read N- to C-terminus: Ribose-5-phosphate isomerase A (219 aa).

Residues Thr-28 to Thr-31, Asp-81 to Asp-84, and Lys-94 to Gly-97 each bind substrate. Glu-103 serves as the catalytic Proton acceptor. Lys-121 is a binding site for substrate.

This sequence belongs to the ribose 5-phosphate isomerase family. In terms of assembly, homodimer.

The enzyme catalyses aldehydo-D-ribose 5-phosphate = D-ribulose 5-phosphate. Its pathway is carbohydrate degradation; pentose phosphate pathway; D-ribose 5-phosphate from D-ribulose 5-phosphate (non-oxidative stage): step 1/1. Its function is as follows. Catalyzes the reversible conversion of ribose-5-phosphate to ribulose 5-phosphate. This chain is Ribose-5-phosphate isomerase A, found in Shigella boydii serotype 18 (strain CDC 3083-94 / BS512).